Consider the following 530-residue polypeptide: NAD(+) kinase (530 aa).

Disordered stretches follow at residues 1–27 (MKENDMNNGVDKWVNEEDGRNDHHNNN), 57–99 (ISSE…KSSN), and 486–530 (SLEA…RFSV). Positions 13–25 (WVNEEDGRNDHHN) are enriched in basic and acidic residues. The segment covering 59-75 (SESSSRRSSLLNKDSSL) has biased composition (low complexity). Over residues 88–99 (INGTRGSSKSSN) the composition is skewed to polar residues. Phosphoserine occurs at positions 499 and 503. Positions 499–508 (SDDESDDESV) are enriched in acidic residues.

It belongs to the NAD kinase family. Homohexamer.

The enzyme catalyses NAD(+) + ATP = ADP + NADP(+) + H(+). Its function is as follows. Specifically phosphorylates NAD in the presence of ATP, dATP, or CTP as phosphoryl donors. The polypeptide is NAD(+) kinase (UTR1) (Saccharomyces cerevisiae (strain ATCC 204508 / S288c) (Baker's yeast)).